The chain runs to 354 residues: Squamosa promoter-binding-like protein 15 (354 aa).

The tract at residues 1–25 is disordered; sequence MELLMCSGQAESGGSSSTESSSLSG. The span at 7-25 shows a compositional bias: low complexity; sequence SGQAESGGSSSTESSSLSG. The SBP-type zinc-finger motif lies at 56-133; that stretch reads TARCQVEGCR…ACHNERRRKP (78 aa). 8 residues coordinate Zn(2+): C59, C64, C81, H84, C100, C103, H107, and C119. Residues 116–132 carry the Bipartite nuclear localization signal motif; sequence KRSCRRRLACHNERRRK.

The cofactor is Zn(2+).

The protein resides in the nucleus. In terms of biological role, trans-acting factor that binds specifically to the consensus nucleotide sequence 5'-TNCGTACAA-3'. The polypeptide is Squamosa promoter-binding-like protein 15 (SPL15) (Arabidopsis thaliana (Mouse-ear cress)).